We begin with the raw amino-acid sequence, 274 residues long: Ribosomal RNA small subunit methyltransferase A (274 aa).

His15, Leu17, Gly42, Glu64, Asp89, and Asn108 together coordinate S-adenosyl-L-methionine.

This sequence belongs to the class I-like SAM-binding methyltransferase superfamily. rRNA adenine N(6)-methyltransferase family. RsmA subfamily.

It is found in the cytoplasm. It catalyses the reaction adenosine(1518)/adenosine(1519) in 16S rRNA + 4 S-adenosyl-L-methionine = N(6)-dimethyladenosine(1518)/N(6)-dimethyladenosine(1519) in 16S rRNA + 4 S-adenosyl-L-homocysteine + 4 H(+). Its function is as follows. Specifically dimethylates two adjacent adenosines (A1518 and A1519) in the loop of a conserved hairpin near the 3'-end of 16S rRNA in the 30S particle. May play a critical role in biogenesis of 30S subunits. This Prochlorococcus marinus (strain AS9601) protein is Ribosomal RNA small subunit methyltransferase A.